The chain runs to 99 residues: NADH-quinone oxidoreductase subunit K (99 aa).

3 helical membrane passes run Pro-3 to Leu-23, Ile-28 to Phe-48, and Val-59 to Ile-79.

Belongs to the complex I subunit 4L family. NDH-1 is composed of 14 different subunits. Subunits NuoA, H, J, K, L, M, N constitute the membrane sector of the complex.

The protein localises to the cell membrane. The catalysed reaction is a quinone + NADH + 5 H(+)(in) = a quinol + NAD(+) + 4 H(+)(out). Its function is as follows. NDH-1 shuttles electrons from NADH, via FMN and iron-sulfur (Fe-S) centers, to quinones in the respiratory chain. The immediate electron acceptor for the enzyme in this species is believed to be a menaquinone. Couples the redox reaction to proton translocation (for every two electrons transferred, four hydrogen ions are translocated across the cytoplasmic membrane), and thus conserves the redox energy in a proton gradient. This Mycobacterium sp. (strain JLS) protein is NADH-quinone oxidoreductase subunit K.